The sequence spans 225 residues: Glycerol-3-phosphate acyltransferase (225 aa).

6 helical membrane-spanning segments follow: residues 1 to 21 (MAIWLLCNGVLLIVAYFLGSF), 56 to 76 (GPGLATLGVDICKGAGAVALV), 95 to 115 (IGLWLSLVVIMAGLMAILGHS), 134 to 154 (VLLVMSWTVGLAALGIFALVV), 159 to 178 (IVSLSSISAAISLPVLMFVA), and 182 to 201 (LAYVLFSITAGVYVVWRHWA).

Belongs to the PlsY family. In terms of assembly, probably interacts with PlsX.

It is found in the cell inner membrane. The enzyme catalyses an acyl phosphate + sn-glycerol 3-phosphate = a 1-acyl-sn-glycero-3-phosphate + phosphate. It participates in lipid metabolism; phospholipid metabolism. Catalyzes the transfer of an acyl group from acyl-phosphate (acyl-PO(4)) to glycerol-3-phosphate (G3P) to form lysophosphatidic acid (LPA). This enzyme utilizes acyl-phosphate as fatty acyl donor, but not acyl-CoA or acyl-ACP. In Acaryochloris marina (strain MBIC 11017), this protein is Glycerol-3-phosphate acyltransferase.